The sequence spans 905 residues: Lateral signaling target protein 2 homolog (905 aa).

Lys87 is covalently cross-linked (Glycyl lysine isopeptide (Lys-Gly) (interchain with G-Cter in ubiquitin)). The residue at position 334 (Ser334) is a Phosphoserine. Positions 354–441 are disordered; the sequence is DEMSSLLSPP…RGQDGQSGEV (88 aa). 2 stretches are compositionally biased toward polar residues: residues 358–367 and 418–437; these read SLLSPPSACQ and PGNTFELTQGNAQQRGQDGQ. Thr512 carries the phosphothreonine modification. 2 disordered regions span residues 516-552 and 589-691; these read NPKSPTSQDSAVAAQEAPGHGTSPLEPRAEGTGDNSH and PGSV…RGDV. Basic and acidic residues-rich tracts occupy residues 542–552 and 605–615; these read PRAEGTGDNSH and GGDKEPERIDE. Over residues 647–656 the composition is skewed to polar residues; it reads SGPQVDTASR. Residues 659–678 show a composition bias toward basic and acidic residues; that stretch reads GEGEVKGQPEPEARKQDPEK. An FYVE-type zinc finger spans residues 835 to 895; it reads DEACGFCTSC…VCTHCYMFHV (61 aa). Zn(2+) is bound by residues Cys841, Cys844, Cys857, Cys860, Cys865, Cys868, and Cys887. The residue at position 888 (Thr888) is a Phosphothreonine; by MAP2K. Cys890 is a binding site for Zn(2+).

This sequence belongs to the lst-2 family. In terms of assembly, interacts with TRIM3. In terms of processing, monoubiquitination at Lys-87 prevents binding to phosphatidylinositol 3-phosphate (PI3P) and localization to early endosome membranes. Enriched in brain (at protein level).

The protein localises to the cytoplasm. Its subcellular location is the cytosol. It localises to the early endosome membrane. Negative regulator of epidermal growth factor receptor (EGFR) signaling. Acts by promoting EGFR degradation in endosomes when not monoubiquitinated. This Mus musculus (Mouse) protein is Lateral signaling target protein 2 homolog (Zfyve28).